A 100-amino-acid polypeptide reads, in one-letter code: MAKKCWIQREKKRQKLEQKYRLIRRSSKKEIREVTSLSEKWEIQRKLQSSPRNSAPTRLRRRCFSTGRPRATYRDFGLSRHILLKMFRAGLLPGATRSSW.

This sequence belongs to the universal ribosomal protein uS14 family. Part of the 30S ribosomal subunit.

Its subcellular location is the plastid. The protein localises to the chloroplast. Binds 16S rRNA, required for the assembly of 30S particles. The sequence is that of Small ribosomal subunit protein uS14c from Pelargonium hortorum (Common geranium).